The chain runs to 634 residues: 1-deoxy-D-xylulose-5-phosphate synthase (634 aa).

Thiamine diphosphate-binding positions include H74 and 115–117; that span reads AHS. D146 lines the Mg(2+) pocket. Thiamine diphosphate is bound by residues 147-148, N176, Y283, and E365; that span reads GA. A Mg(2+)-binding site is contributed by N176.

This sequence belongs to the transketolase family. DXPS subfamily. As to quaternary structure, homodimer. It depends on Mg(2+) as a cofactor. The cofactor is thiamine diphosphate.

It carries out the reaction D-glyceraldehyde 3-phosphate + pyruvate + H(+) = 1-deoxy-D-xylulose 5-phosphate + CO2. Its pathway is metabolic intermediate biosynthesis; 1-deoxy-D-xylulose 5-phosphate biosynthesis; 1-deoxy-D-xylulose 5-phosphate from D-glyceraldehyde 3-phosphate and pyruvate: step 1/1. Catalyzes the acyloin condensation reaction between C atoms 2 and 3 of pyruvate and glyceraldehyde 3-phosphate to yield 1-deoxy-D-xylulose-5-phosphate (DXP). The polypeptide is 1-deoxy-D-xylulose-5-phosphate synthase (Burkholderia mallei (strain ATCC 23344)).